A 715-amino-acid chain; its full sequence is Probable GTP diphosphokinase RSH3, chloroplastic (715 aa).

The N-terminal 64 residues, 1 to 64 (MVVATTIALY…LLFSGASVKS (64 aa)), are a transit peptide targeting the chloroplast. Low complexity predominate over residues 65-74 (SSSSSSSHPS). A disordered region spans residues 65-84 (SSSSSSSHPSVGEELASIRH). Residues 237–341 (YLQHCVETAM…IKLADRLHNM (105 aa)) form the HD domain.

It belongs to the RelA/SpoT family. Expressed in roots, hypocotyls, shoots, cotyledons, rosette and cauline leaves, stems, petals, sepals, stamens, pistils and siliques.

The protein localises to the plastid. It is found in the chloroplast. The enzyme catalyses GTP + ATP = guanosine 3'-diphosphate 5'-triphosphate + AMP. Possesses ppGpp (guanosine 3'-diphosphate 5'-diphosphate) synthetase activity in vitro and is able to functionally complement E.coli relA mutants. May be involved in a rapid plant ppGpp-mediated response to pathogens and other stresses. The chain is Probable GTP diphosphokinase RSH3, chloroplastic (RSH3) from Arabidopsis thaliana (Mouse-ear cress).